Here is a 461-residue protein sequence, read N- to C-terminus: Argininosuccinate lyase (461 aa).

This sequence belongs to the lyase 1 family. Argininosuccinate lyase subfamily.

The protein resides in the cytoplasm. It carries out the reaction 2-(N(omega)-L-arginino)succinate = fumarate + L-arginine. It functions in the pathway amino-acid biosynthesis; L-arginine biosynthesis; L-arginine from L-ornithine and carbamoyl phosphate: step 3/3. This is Argininosuccinate lyase from Bacillus subtilis (strain 168).